We begin with the raw amino-acid sequence, 460 residues long: Ammonium transporter Rh type B (460 aa).

Residues 1–10 (MTGYSTNMRI) are Cytoplasmic-facing. A helical transmembrane segment spans residues 11–31 (KLPVFCLLLEFITIILFAVFV). Residues 32–62 (RYDHESDAKQWHDEMRNHSVQNAENDFYFRY) are Extracellular-facing. Residue N48 is glycosylated (N-linked (GlcNAc...) asparagine). A helical membrane pass occupies residues 63–83 (PSFQDVHVMIFIGFGFLMTFL). Over 84–87 (KRYG) the chain is Cytoplasmic. A helical transmembrane segment spans residues 88 to 108 (FSSVAFNFLIAAFGLQWSTLI). Residues 109–125 (QGFFHGFHDGKIHVGIE) are Extracellular-facing. Residues 126–146 (SMINADFCTGAVLISFGAVLG) traverse the membrane as a helical segment. The Cytoplasmic portion of the chain corresponds to 147–150 (KTSP). A helical membrane pass occupies residues 151–171 (VQLIVMTLIEVTLFGINEYII). The Extracellular portion of the chain corresponds to 172–179 (LNIVGAKD). The chain crosses the membrane as a helical span at residues 180–202 (AGGSMTIHTFGAYFGLIVSRVLY). The Cytoplasmic segment spans residues 203-220 (RDDLEKSRQREGSVYHSD). Residues 221–241 (LFAMIGTIYLWMFWPSFNSAI) form a helical membrane-spanning segment. Residues 242-252 (TAHGDDQHRTV) are Extracellular-facing. The helical transmembrane segment at 253–273 (MNTYYSLAACTLATFGFSALL) threads the bilayer. Residues 274–283 (NGEGKLDMVH) lie on the Cytoplasmic side of the membrane. A helical transmembrane segment spans residues 284 to 304 (IQNAALAGGVAVGTSGEMMLT). Residue P305 is a topological domain, extracellular. The helical transmembrane segment at 306-326 (FGAMIAGTLAGMISVLGYKYL) threads the bilayer. Over 327–347 (TPVLDSKLKIQDTCGVHNLHG) the chain is Cytoplasmic. Residues 348–368 (MPGILGALIGAIVALFATAEI) traverse the membrane as a helical segment. Over 369–394 (YGAGMEDVFPLISDGSRTAKQQSLYQ) the chain is Extracellular. The helical transmembrane segment at 395–415 (FLALLVALGFAILGGLVVGFI) threads the bilayer. Topologically, residues 416 to 460 (LKLPIFGTPSDAECFEDAVYWEVPGGEGHQQLTVVINNEDPDTQA) are cytoplasmic.

Belongs to the ammonium transporter (TC 2.A.49) family. Rh subfamily.

It localises to the basolateral cell membrane. The protein localises to the cytoplasmic vesicle membrane. Functions as a specific ammonium transporter. The protein is Ammonium transporter Rh type B (rhbg) of Xenopus tropicalis (Western clawed frog).